A 167-amino-acid chain; its full sequence is Thioredoxin M-type, chloroplastic (167 aa).

A chloroplast-targeting transit peptide spans 1–53; that stretch reads MAMETCFRAWALHAPAGSKDRLLVGNLVLPSKRALAPLSVGRVATRRPRHVCQ. One can recognise a Thioredoxin domain in the interval 54–165; it reads SKNAVDEVVV…LTTLIDKYIG (112 aa). An intrachain disulfide couples Cys-89 to Cys-92.

The protein belongs to the thioredoxin family. Plant M-type subfamily. Forms a complex with heterodimeric ferredoxin-thioredoxin reductase (FTR) and ferredoxin.

It is found in the plastid. Its subcellular location is the chloroplast. Participates in various redox reactions through the reversible oxidation of the active center dithiol to a disulfide. The M form is known to activate NADP-malate dehydrogenase. The chain is Thioredoxin M-type, chloroplastic (TRM1) from Zea mays (Maize).